The following is a 540-amino-acid chain: Putative sel1-like repeat-containing protein R815 (540 aa).

Sel1-like repeat units lie at residues 129-164 (IDAQ…YKEN), 165-200 (LFGL…KHNY), 201-236 (PAVK…NQGY), 237-272 (PLAQ…NNGC), 273-308 (LYAT…SENY), and 309-344 (LLAI…NSTK).

The polypeptide is Putative sel1-like repeat-containing protein R815 (Acanthamoeba polyphaga (Amoeba)).